A 707-amino-acid polypeptide reads, in one-letter code: DNA ligase (707 aa).

NAD(+) contacts are provided by residues 36 to 40, 85 to 86, and Glu-116; these read DADFD and SL. Residue Lys-118 is the N6-AMP-lysine intermediate of the active site. Positions 139, 180, 298, and 322 each coordinate NAD(+). Cys-416, Cys-419, Cys-434, and Cys-440 together coordinate Zn(2+). In terms of domain architecture, BRCT spans 613-707; the sequence is AASSKIAGRS…STHVDPERMV (95 aa).

The protein belongs to the NAD-dependent DNA ligase family. LigA subfamily. The cofactor is Mg(2+). Mn(2+) serves as cofactor.

The enzyme catalyses NAD(+) + (deoxyribonucleotide)n-3'-hydroxyl + 5'-phospho-(deoxyribonucleotide)m = (deoxyribonucleotide)n+m + AMP + beta-nicotinamide D-nucleotide.. In terms of biological role, DNA ligase that catalyzes the formation of phosphodiester linkages between 5'-phosphoryl and 3'-hydroxyl groups in double-stranded DNA using NAD as a coenzyme and as the energy source for the reaction. It is essential for DNA replication and repair of damaged DNA. This chain is DNA ligase, found in Nitrosospira multiformis (strain ATCC 25196 / NCIMB 11849 / C 71).